The primary structure comprises 732 residues: MLRLLRLLLLLLLPPPGSPEPPEPPGLAQLSPGSPPQAPDLLYADGLRAYSAGAWAPAVALLREALRSRAALGRARQECGASCAAEPGAALPSQLLGAPHPVSGPGVWEPLLLRATLRRAECLTQCAVRRLGPGGAARLRVGSALRDAFRRREPYNYLQRAYYQLKKLDLAASAAHTFFVANPTHLQMREDMAKYRRMSAIRPQSFRDLVTPLYWAAYDTGLELLEQREAALALPQLEEALQGSLAHMESCRAACEGPEEHQGAEEEGEGSQGGLYEAIAGHWIRVLQCRQHCVADTATRPGRSFPVQDFLLSQLRRLHEAYAQVGNMSQAMENVLSVLLFYPEDEAAKKALNQYQTQLGEPRPDLGPREDIQRFILRSLGEKRQLYYAMEHLGTSFKDPDSWTPEALIPKALRERLREDQEKKPWDHQPPQQKPLAHWKDALLMEGVTLTQDAQQLNGSERAVLDGLLTSAECGVLLQLAKDAAQAGARSGYRGRRSPHSPHERFEGLTVLKAAQLARAGTVGRPGAKLLLEVSERVRTLTQAYFSPERPLHLSFTHLVCRSAIEGEQEQRMDLSHPVHADNCVLDPDTGECWREPPAYTYRDYSGLLYLNDDFKGGDLFFTQPNALTVTAQVRPRCGRLVAFSSGGENPHGVWAVTRGRRCALALWHTWAPEHSEQEWTEAKELLQEEEEEEEEEDILSRDPSPEPPSHKLQRVQEKAGKPRRVRVREEL.

The signal sequence occupies residues 1-19; sequence MLRLLRLLLLLLLPPPGSP. Positions 15 to 25 are enriched in pro residues; that stretch reads PPGSPEPPEPP. Residues 15 to 35 are disordered; the sequence is PPGSPEPPEPPGLAQLSPGSP. TPR repeat units follow at residues 39-72, 152-185, 214-247, and 312-345; these read PDLLYADGLRAYSAGAWAPAVALLREALRSRAAL, REPYNYLQRAYYQLKKLDLAASAAHTFFVANPTH, YWAAYDTGLELLEQREAALALPQLEEALQGSLAH, and LSQLRRLHEAYAQVGNMSQAMENVLSVLLFYPED. Residues Asn-327 and Asn-458 are each glycosylated (N-linked (GlcNAc...) asparagine). The Fe2OG dioxygenase domain maps to 557–671; the sequence is THLVCRSAIE…RCALALWHTW (115 aa). Residues His-580, Asp-582, and His-652 each coordinate Fe cation. The active site involves Arg-662. Residues 674–703 adopt a coiled-coil conformation; that stretch reads EHSEQEWTEAKELLQEEEEEEEEEDILSRD. Residues 676-687 show a composition bias toward basic and acidic residues; that stretch reads SEQEWTEAKELL. Positions 676 to 732 are disordered; it reads SEQEWTEAKELLQEEEEEEEEEDILSRDPSPEPPSHKLQRVQEKAGKPRRVRVREEL. The segment covering 688–698 has biased composition (acidic residues); the sequence is QEEEEEEEEED. The segment covering 722-732 has biased composition (basic residues); it reads KPRRVRVREEL. A Prevents secretion from ER motif is present at residues 729 to 732; that stretch reads REEL.

Belongs to the leprecan family. Identified in a complex with PLOD1 and P3H4. Requires Fe cation as cofactor. It depends on L-ascorbate as a cofactor. In terms of tissue distribution, detected in kidney (at protein level).

It localises to the endoplasmic reticulum. It carries out the reaction L-prolyl-[collagen] + 2-oxoglutarate + O2 = trans-3-hydroxy-L-prolyl-[collagen] + succinate + CO2. Functionally, part of a complex composed of PLOD1, P3H3 and P3H4 that catalyzes hydroxylation of lysine residues in collagen alpha chains and is required for normal assembly and cross-linkling of collagen fibrils. Required for normal hydroxylation of lysine residues in type I collagen chains in skin, bone, tendon, aorta and cornea. Required for normal skin stability via its role in hydroxylation of lysine residues in collagen alpha chains and in collagen fibril assembly. Apparently not required for normal prolyl 3-hydroxylation on collagen chains, possibly because it functions redundantly with other prolyl 3-hydroxylases. The protein is Prolyl 3-hydroxylase 3 of Mus musculus (Mouse).